The following is a 329-amino-acid chain: Putative methylthioribose-1-phosphate isomerase (329 aa).

Residues 50 to 52 (RGA), arginine 84, and glutamine 182 each bind substrate. Aspartate 223 (proton donor) is an active-site residue. 233–234 (NK) lines the substrate pocket.

It belongs to the eIF-2B alpha/beta/delta subunits family. MtnA subfamily.

It carries out the reaction 5-(methylsulfanyl)-alpha-D-ribose 1-phosphate = 5-(methylsulfanyl)-D-ribulose 1-phosphate. Catalyzes the interconversion of methylthioribose-1-phosphate (MTR-1-P) into methylthioribulose-1-phosphate (MTRu-1-P). The polypeptide is Putative methylthioribose-1-phosphate isomerase (Methanocaldococcus jannaschii (strain ATCC 43067 / DSM 2661 / JAL-1 / JCM 10045 / NBRC 100440) (Methanococcus jannaschii)).